Here is an 855-residue protein sequence, read N- to C-terminus: uncharacterized protein (855 aa).

10 helical membrane-spanning segments follow: residues 24 to 44 (PFQY…IVAI), 256 to 276 (AFTV…IFLI), 318 to 338 (IGTG…IGLV), 361 to 381 (LLKG…PPAI), 404 to 424 (LMPW…LMLW), 430 to 450 (LVVA…IAPP), 487 to 507 (IAIA…ISVG), 725 to 745 (ITIA…LSAL), 780 to 800 (MGGM…WILV), and 821 to 841 (FLRA…YPAW).

This sequence belongs to the ABC-4 integral membrane protein family. The complex is probably composed of two ATP-binding proteins (Rv0986) and two transmembrane proteins (Rv0987).

It is found in the cell membrane. Functionally, probably part of an ABC transporter complex involved in host cell binding either through secretion of an adherence factor or through maintaining the architecture and integrity of the mycobacterial cell envelope. Could be required for host endothelial-cell invasion and/or intracellular survival. This is an uncharacterized protein from Mycobacterium tuberculosis (strain ATCC 25618 / H37Rv).